A 267-amino-acid polypeptide reads, in one-letter code: Chlorophyll a-b binding protein 3A, chloroplastic (267 aa).

The transit peptide at 1–34 (MAASTMALSSSTFAGKTVKLAPSSSEITGNGRIT) directs the protein to the chloroplast. The helical transmembrane segment at 153-173 (LVHAQSILAIWACQVVLMGAV) threads the bilayer. Residues Val154, Ser158, Gln166, Glu174, Arg177, and Leu183 each coordinate chlorophyll b. 7 residues coordinate chlorophyll a: Lys214, Glu215, Asn218, Arg220, Gln232, His247, and Ala256. A helical membrane pass occupies residues 221 to 241 (LAMFSMFGFFVQAIVTGKGPL). Phe263 contributes to the chlorophyll b binding site.

Belongs to the light-harvesting chlorophyll a/b-binding (LHC) protein family. In terms of assembly, the LHC complex consists of chlorophyll a-b binding proteins. Binds at least 14 chlorophylls (8 Chl-a and 6 Chl-b) and carotenoids such as lutein and neoxanthin. serves as cofactor. Photoregulated by reversible phosphorylation of its threonine residues.

The protein resides in the plastid. Its subcellular location is the chloroplast thylakoid membrane. In terms of biological role, the light-harvesting complex (LHC) functions as a light receptor, it captures and delivers excitation energy to photosystems with which it is closely associated. In Solanum lycopersicum (Tomato), this protein is Chlorophyll a-b binding protein 3A, chloroplastic (CAB3A).